We begin with the raw amino-acid sequence, 555 residues long: 3-oxocholest-4-en-26-oate--CoA ligase (555 aa).

Residues 172–180, Asp-418, Arg-433, and Lys-524 each bind ATP; that span reads TGGTTGHPK. The segment at 525-555 is disordered; sequence PDYRWAKDQTGLRPADEVYNNGDGNGAAATG. Residues 544–555 are compositionally biased toward low complexity; it reads NNGDGNGAAATG.

This sequence belongs to the ATP-dependent AMP-binding enzyme family.

The enzyme catalyses (25S)-3-oxocholest-4-en-26-oate + ATP + CoA = (25S)-3-oxocholest-4-en-26-oyl-CoA + AMP + diphosphate. It functions in the pathway steroid metabolism; cholesterol metabolism. Involved in the degradation of the side chains of C-24 branched-chain sterols. Catalyzes the ATP-dependent CoA thioesterification of the sterol 3-oxocholest-4-en-26-oate to yield 3-oxocholest-4-en-26-oyl-CoA. It can also use beta-sitosterol, campesterol and 3beta-hydroxy-5-cholesten-26-oate. The protein is 3-oxocholest-4-en-26-oate--CoA ligase of Rhodococcus rhodochrous.